The chain runs to 217 residues: MNYPHPLIAREGWPFLAGAFIVSVLVHISAGFWGALPLWIVTLFVLQFFRDPPRPIPSAPNAILAPADGRIVVVEKTQDPYAGREALKISVFMNVFNVHSNRSSLDGKVEKLEYFPGKFVNADLDKASMENERNAVVIRRASDGQVVTLVQVAGLVARRILCYINVGDMLSRGQRYGFIRFGSRVDVYLPTDARPRVTIGEKVSASATVLADLDVRA.

The active-site Schiff-base intermediate with substrate; via pyruvic acid is Ser183. The residue at position 183 (Ser183) is a Pyruvic acid (Ser); by autocatalysis.

Belongs to the phosphatidylserine decarboxylase family. PSD-A subfamily. Heterodimer of a large membrane-associated beta subunit and a small pyruvoyl-containing alpha subunit. Pyruvate serves as cofactor. Post-translationally, is synthesized initially as an inactive proenzyme. Formation of the active enzyme involves a self-maturation process in which the active site pyruvoyl group is generated from an internal serine residue via an autocatalytic post-translational modification. Two non-identical subunits are generated from the proenzyme in this reaction, and the pyruvate is formed at the N-terminus of the alpha chain, which is derived from the carboxyl end of the proenzyme. The post-translation cleavage follows an unusual pathway, termed non-hydrolytic serinolysis, in which the side chain hydroxyl group of the serine supplies its oxygen atom to form the C-terminus of the beta chain, while the remainder of the serine residue undergoes an oxidative deamination to produce ammonia and the pyruvoyl prosthetic group on the alpha chain.

The protein localises to the cell membrane. It catalyses the reaction a 1,2-diacyl-sn-glycero-3-phospho-L-serine + H(+) = a 1,2-diacyl-sn-glycero-3-phosphoethanolamine + CO2. The protein operates within phospholipid metabolism; phosphatidylethanolamine biosynthesis; phosphatidylethanolamine from CDP-diacylglycerol: step 2/2. Functionally, catalyzes the formation of phosphatidylethanolamine (PtdEtn) from phosphatidylserine (PtdSer). In Cupriavidus metallidurans (strain ATCC 43123 / DSM 2839 / NBRC 102507 / CH34) (Ralstonia metallidurans), this protein is Phosphatidylserine decarboxylase proenzyme.